A 558-amino-acid chain; its full sequence is S-layer protein (558 aa).

The first 28 residues, methionine 1–alanine 28, serve as a signal peptide directing secretion. Residues asparagine 112, asparagine 138, asparagine 158, asparagine 197, asparagine 226, asparagine 291, and asparagine 374 are each glycosylated (N-linked (GlcNAc...) asparagine).

The protein belongs to the Mj S-layer protein family.

It localises to the secreted. The protein localises to the cell wall. The protein resides in the S-layer. Its function is as follows. S-layer protein. The S-layer is a paracrystalline mono-layered assembly of proteins which coat the surface of the cell. The sequence is that of S-layer protein (sla) from Methanocaldococcus jannaschii (strain ATCC 43067 / DSM 2661 / JAL-1 / JCM 10045 / NBRC 100440) (Methanococcus jannaschii).